We begin with the raw amino-acid sequence, 393 residues long: Dual specificity mitogen-activated protein kinase kinase 1 (393 aa).

Residues 1–26 form a disordered region; it reads MPKKKPTPIQLNPTPDGSAVNGTSSA. Residues 9 to 26 show a composition bias toward polar residues; it reads IQLNPTPDGSAVNGTSSA. The region spanning 68-361 is the Protein kinase domain; it reads FEKISELGAG…LKQLLVHAFI (294 aa). ATP is bound by residues 74–82 and Lys97; that span reads LGAGNGGVV. Asp190 (proton acceptor) is an active-site residue. 2 positions are modified to phosphoserine; by RAF: Ser218 and Ser222. Residues 270–307 are RAF1-binding; the sequence is ELELLFGCQVEGDAAETPPRPRTPGRPLSSYGMDSRPP. Position 286 is a phosphothreonine (Thr286). Residue Thr292 is modified to Phosphothreonine; by MAPK1. The residue at position 298 (Ser298) is a Phosphoserine; by PAK.

This sequence belongs to the protein kinase superfamily. STE Ser/Thr protein kinase family. MAP kinase kinase subfamily. In terms of assembly, found in a complex with at least BRAF, HRAS, MAP2K1, MAPK3/ERK1 and RGS14. Forms a heterodimer with MAP2K2/MEK2. Forms heterodimers with KSR2 which further dimerize to form tetramers. Interacts with KSR1 or KSR2 and BRAF; the interaction with KSR1 or KSR2 mediates KSR1-BRAF or KSR2-BRAF dimerization. Interacts with ARBB2, LAMTOR3, MAPK1/ERK2 and RAF1. Interacts with MAPK1/ERK2. Interacts with MORG1. Interacts with PPARG. Interacts with isoform 1 of VRK2. Interacts with SGK1. Interacts with BIRC6/bruce. Interacts with KAT7; the interaction promotes KAT7 phosphorylation. Interacts with RAF1 and NEK10; the interaction is required for ERK1/2-signaling pathway activation in response to UV irradiation. Interacts with TRAF3IP3. Interacts with MOS. Post-translationally, phosphorylation at Ser-218 and Ser-222 by MAP kinase kinase kinases (BRAF or MEKK1) positively regulates the kinase activity. Also phosphorylated at Thr-292 by MAPK1/ERK2 and at Ser-298 by PAK. MAPK1/ERK2 phosphorylation of Thr-292 occurs in response to cellular adhesion and leads to inhibition of Ser-298 phosphorylation by PAK. Autophosphorylated at Ser-218 and Ser-222, autophosphosphorylation is promoted by NEK10 following UV irradiation.

The protein resides in the cytoplasm. Its subcellular location is the cytoskeleton. The protein localises to the microtubule organizing center. It localises to the centrosome. It is found in the spindle pole body. The protein resides in the nucleus. Its subcellular location is the membrane. The catalysed reaction is L-seryl-[protein] + ATP = O-phospho-L-seryl-[protein] + ADP + H(+). It catalyses the reaction L-threonyl-[protein] + ATP = O-phospho-L-threonyl-[protein] + ADP + H(+). The enzyme catalyses L-tyrosyl-[protein] + ATP = O-phospho-L-tyrosyl-[protein] + ADP + H(+). Its activity is regulated as follows. Ras proteins such as HRAS mediate the activation of RAF proteins such as RAF1 or BRAF which in turn activate extracellular signal-regulated kinases (ERK) through MAPK (mitogen-activated protein kinases) and ERK kinases MAP2K1/MEK1 and MAP2K2/MEK2. Activation occurs through phosphorylation of Ser-218 and Ser-222. MAP2K1/MEK1 binds KSR1 or KSR2 releasing the inhibitory intramolecular interaction between KSR1 or KSR2 protein kinase and N-terminal domains. This allows KSR1 or KSR2 dimerization with BRAF leading to BRAF activation and phosphorylation of MAP2K1. MAP2K1/MEK1 is also the target of negative feed-back regulation by its substrate kinases, such as MAPK1/ERK2. These phosphorylate MAP2K1/MEK1 on Thr-292, thereby facilitating dephosphorylation of the activating residues Ser-218 and Ser-222. Inhibited by serine/threonine phosphatase 2A. In terms of biological role, dual specificity protein kinase which acts as an essential component of the MAP kinase signal transduction pathway. Binding of extracellular ligands such as growth factors, cytokines and hormones to their cell-surface receptors activates RAS and this initiates RAF1 activation. RAF1 then further activates the dual-specificity protein kinases MAP2K1/MEK1 and MAP2K2/MEK2. Both MAP2K1/MEK1 and MAP2K2/MEK2 function specifically in the MAPK/ERK cascade, and catalyze the concomitant phosphorylation of a threonine and a tyrosine residue in a Thr-Glu-Tyr sequence located in the extracellular signal-regulated kinases MAPK3/ERK1 and MAPK1/ERK2, leading to their activation and further transduction of the signal within the MAPK/ERK cascade. Activates BRAF in a KSR1 or KSR2-dependent manner; by binding to KSR1 or KSR2 releases the inhibitory intramolecular interaction between KSR1 or KSR2 protein kinase and N-terminal domains which promotes KSR1 or KSR2-BRAF dimerization and BRAF activation. Depending on the cellular context, this pathway mediates diverse biological functions such as cell growth, adhesion, survival and differentiation, predominantly through the regulation of transcription, metabolism and cytoskeletal rearrangements. One target of the MAPK/ERK cascade is peroxisome proliferator-activated receptor gamma (PPARG), a nuclear receptor that promotes differentiation and apoptosis. MAP2K1/MEK1 has been shown to export PPARG from the nucleus. The MAPK/ERK cascade is also involved in the regulation of endosomal dynamics, including lysosome processing and endosome cycling through the perinuclear recycling compartment (PNRC), as well as in the fragmentation of the Golgi apparatus during mitosis. This chain is Dual specificity mitogen-activated protein kinase kinase 1 (MAP2K1), found in Cricetulus griseus (Chinese hamster).